We begin with the raw amino-acid sequence, 158 residues long: MRIHEVNPQKGSTKRRRRIGRGISAGQGASGGFGMRGQKSRSGTGTKAGFEGGQMPLYRRVPKLKHFPLVNPSHYTIINVGKLNSLSPNTEVTLESLMEVGLITSNDGPLKVLGNGELTVPLTVRAPKFTASAKAKIESAGGSCQDLSDTSNAPSNNE.

2 disordered regions span residues 1–53 (MRIH…FEGG) and 138–158 (ESAGGSCQDLSDTSNAPSNNE). The span at 23–35 (ISAGQGASGGFGM) shows a compositional bias: gly residues. Positions 145–158 (QDLSDTSNAPSNNE) are enriched in polar residues.

Belongs to the universal ribosomal protein uL15 family. Part of the 50S ribosomal subunit.

Its function is as follows. Binds to the 23S rRNA. The sequence is that of Large ribosomal subunit protein uL15 from Crocosphaera subtropica (strain ATCC 51142 / BH68) (Cyanothece sp. (strain ATCC 51142)).